Consider the following 357-residue polypeptide: mRNA export factor GLE2 (357 aa).

The segment at 1–31 is disordered; it reads MAGLFGTTTSTTTSTLGDLKNDVELGSPPED. 5 WD repeats span residues 28-71, 76-115, 117-158, 160-197, and 256-295; these read PPED…QNQG, EHEG…AMQV, AHDA…PAGT, QCQE…KFYK, and TNVH…RLKG.

Belongs to the WD repeat rae1 family. As to quaternary structure, component of the nuclear pore complex (NPC). NPC constitutes the exclusive means of nucleocytoplasmic transport. NPCs allow the passive diffusion of ions and small molecules and the active, nuclear transport receptor-mediated bidirectional transport of macromolecules such as proteins, RNAs, ribonucleoparticles (RNPs), and ribosomal subunits across the nuclear envelope. Due to its 8-fold rotational symmetry, all subunits are present with 8 copies or multiples thereof.

The protein resides in the nucleus. It localises to the nuclear pore complex. Its subcellular location is the nucleus membrane. In terms of biological role, functions as a component of the nuclear pore complex (NPC). NPC components, collectively referred to as nucleoporins (NUPs), can play the role of both NPC structural components and of docking or interaction partners for transiently associated nuclear transport factors. It is specifically important for nuclear mRNA export. The protein is mRNA export factor GLE2 (GLE2) of Chaetomium thermophilum (strain DSM 1495 / CBS 144.50 / IMI 039719) (Thermochaetoides thermophila).